The primary structure comprises 1118 residues: DNA mismatch repair protein MSH1, mitochondrial (1118 aa).

Residue 768 to 775 (GPNGGGKS) coordinates ATP.

Belongs to the DNA mismatch repair MutS family.

It localises to the mitochondrion. The protein localises to the plastid. Its subcellular location is the chloroplast. Its function is as follows. DNA mismatch repair protein specifically involved in maintenance of mitochondrial genome configuration by controlling specific rearranged portion. Functions by suppressing asymmetric recombination at some repeat pairs. In Arabidopsis thaliana (Mouse-ear cress), this protein is DNA mismatch repair protein MSH1, mitochondrial (MSH1).